Reading from the N-terminus, the 326-residue chain is Virulence-associated V antigen (326 aa).

The protein localises to the secreted. Possibly involved in calcium regulation of YOP expression, which includes the export process. The protein is Virulence-associated V antigen (lcrV) of Yersinia pestis.